A 344-amino-acid chain; its full sequence is MRRLTMTRPDDWHLHLRDGAAMKAVLPHTVRQFARAIIMPNLKPPVRSVADAASYRERILAAVPEGQQFEPLMTLYLTDNTSPEEIVAAKASQFVKAVKYYPAGATTNSDLGVTDLRRCDGVLAAMEQVDMPLLLHGEVTDGDIDVFDREKVFIEKHLIPLITRFPKLRVVFEHITTADAVKFVLSANNNVAATITPQHLLFSRNILFTGGIRPHFYCLPILKREDHRLALLQAATSGNPKFFLGTDSAPHSRYSKESSCGCAGCYSALHALELYAEAFESVDAIDQLEGFASFHGPDFYQLPRNTEQITLTKSPWRIPDELPFPESGLVPLRAGEEITWQLGE.

Zn(2+)-binding residues include H13 and H15. Substrate is bound by residues 15 to 17 (HLR) and N41. Zn(2+)-binding residues include K99, H136, and H174. K99 bears the N6-carboxylysine mark. H136 is a binding site for substrate. Residue L219 participates in substrate binding. A Zn(2+)-binding site is contributed by D247. The active site involves D247. Residues H251 and A263 each contribute to the substrate site.

The protein belongs to the metallo-dependent hydrolases superfamily. DHOase family. Class II DHOase subfamily. In terms of assembly, homodimer. The cofactor is Zn(2+).

It carries out the reaction (S)-dihydroorotate + H2O = N-carbamoyl-L-aspartate + H(+). The protein operates within pyrimidine metabolism; UMP biosynthesis via de novo pathway; (S)-dihydroorotate from bicarbonate: step 3/3. Functionally, catalyzes the reversible cyclization of carbamoyl aspartate to dihydroorotate. This is Dihydroorotase from Microcystis aeruginosa (strain NIES-843 / IAM M-2473).